Reading from the N-terminus, the 951-residue chain is Spliceosome associated factor 3, U4/U6 recycling protein (951 aa).

A disordered region spans residues 1–58 (MAATGNEEQTLLPDIEEEAEGMEREMESEDDEEEGMGVEHSEEEDEEDTSEDERENEA). Acidic residues predominate over residues 14-56 (DIEEEAEGMEREMESEDDEEEGMGVEHSEEEDEEDTSEDEREN). 8 HAT repeats span residues 88–120 (GKLHRLRKARQKMSELFPLTEEIWLDWLKDEIR), 126–157 (SDREKVYELFERAIKDYVCPEIWLEYVQYSIG), 163–199 (GGIERVRSIFERALTAVGLHMTKGASIWEAYREFEIV), 222–255 (AQLERIHTLFRRQLAVPLMDMEGTYAEYSDWADD), 304–336 (GDPARVQIIFERALAENCLVPDLWIKYTTYLDR), 339–371 (KIKDLVLSAHERAVRNCPWTMGLWKSYLLALER), 374–410 (ADHQTVKDVFEKALNAGFIQATDYVEIWQSYLDYLRR), and 467–500 (KNMQKARELWDSIMTKGNAKYANMWLEYYNLERS). A necessary and sufficient for U6 snRNA binding region spans residues 517-941 (CTSDYPEHVC…LDTQTKSLSN (425 aa)). Positions 533-593 (ERVEGSLEDW…VKADKKAQKK (61 aa)) form a coiled coil. Over residues 567–581 (EALHARQEEEKAEQR) the composition is skewed to basic and acidic residues. The tract at residues 567–686 (EALHARQEEE…HDMPKEQRKD (120 aa)) is disordered. Over residues 582-596 (RKVKADKKAQKKGQK) the composition is skewed to basic residues. Residues 608–619 (DDDEEEWGEEAE) show a composition bias toward acidic residues. Over residues 674-686 (RQPHDMPKEQRKD) the composition is skewed to basic and acidic residues. RRM domains follow at residues 688-766 (NCVF…PCVD) and 785-862 (HKIF…ISNP). Residues 905–938 (RQSTPDAKAENGTISAPHATVTDGETSLDTQTKS) form a disordered region. Over residues 927–938 (DGETSLDTQTKS) the composition is skewed to polar residues.

It localises to the nucleus. The protein resides in the nucleoplasm. It is found in the cajal body. The protein localises to the nucleus speckle. Its subcellular location is the cytoplasm. U6 snRNP-binding protein that functions as a recycling factor of the splicing machinery. Promotes the initial reassembly of U4 and U6 snRNPs following their ejection from the spliceosome during its maturation. May also function as a substrate targeting factor for deubiquitinases and mediate the deubiquitination of components of the spliceosome and histones. The polypeptide is Spliceosome associated factor 3, U4/U6 recycling protein (Danio rerio (Zebrafish)).